Consider the following 213-residue polypeptide: High frequency lysogenization protein HflD homolog (213 aa).

The stretch at 79–126 (QGLNAELTRYTLSLMVLERKLSSAKGALDTLGNRINGLQRQLEHFDLQ) forms a coiled coil.

This sequence belongs to the HflD family.

The protein resides in the cytoplasm. Its subcellular location is the cell inner membrane. The protein is High frequency lysogenization protein HflD homolog of Shigella flexneri serotype 5b (strain 8401).